We begin with the raw amino-acid sequence, 232 residues long: Ribose-5-phosphate isomerase A (232 aa).

Residues 28 to 31, 83 to 86, and 96 to 99 contribute to the substrate site; these read TGST, DGAD, and KGGG. Glu105 functions as the Proton acceptor in the catalytic mechanism. A substrate-binding site is contributed by Lys123.

This sequence belongs to the ribose 5-phosphate isomerase family. As to quaternary structure, homodimer.

It carries out the reaction aldehydo-D-ribose 5-phosphate = D-ribulose 5-phosphate. It participates in carbohydrate degradation; pentose phosphate pathway; D-ribose 5-phosphate from D-ribulose 5-phosphate (non-oxidative stage): step 1/1. In terms of biological role, catalyzes the reversible conversion of ribose-5-phosphate to ribulose 5-phosphate. In Rhodopseudomonas palustris (strain BisB5), this protein is Ribose-5-phosphate isomerase A.